Consider the following 370-residue polypeptide: Nociceptin receptor (370 aa).

The Extracellular portion of the chain corresponds to 1–48 (MESLFPAPFWEVLYGSPLQGNLSLLSPNHSLLPPHLLLNASHGAFLPL). Residues asparagine 21, asparagine 28, and asparagine 39 are each glycosylated (N-linked (GlcNAc...) asparagine). A helical membrane pass occupies residues 49 to 74 (GLKVTIVGLYLAVCVGGLLGNCLVMY). Residues 75 to 87 (VILRHTKMKTATN) are Cytoplasmic-facing. A helical membrane pass occupies residues 88–109 (IYIFNLALADTAVLLTLPFQGT). Over 110 to 124 (DVLLGFWPFGNALCK) the chain is Extracellular. An intrachain disulfide couples cysteine 123 to cysteine 200. A helical membrane pass occupies residues 125–146 (AVIAIDYYNMFTSAFTLTAMSV). Topologically, residues 147–165 (DRYVAICHPIRALDVRTSS) are cytoplasmic. A helical membrane pass occupies residues 166 to 188 (KAQAVNVAIWALASIVGVPVAIM). At 189–211 (GSAQVEDEEIECLVEIPAPQDYW) the chain is on the extracellular side. The chain crosses the membrane as a helical span at residues 212–236 (GPVFAVCIFLFSFVIPVLIISVCYS). Residues 237–264 (LMVRRLRGVRLLSGSREKDRNLRRITRL) are Cytoplasmic-facing. Residues 265–285 (VLVVVAVFVGCWTPVQVFVLV) traverse the membrane as a helical segment. Over 286 to 300 (QGLGVQPGSETAVAV) the chain is Extracellular. A helical transmembrane segment spans residues 301–322 (LRFCTALGYVNSCLNPILYAFL). The Cytoplasmic portion of the chain corresponds to 323-370 (DENFKACFRKFCCAPTRRREMQVSDRVRSIAKDVALACKTSETVPRPA). The S-palmitoyl cysteine moiety is linked to residue cysteine 334.

The protein belongs to the G-protein coupled receptor 1 family. Phosphorylation at Ser-363 requires GRK3. In terms of tissue distribution, detected in brain cortex, stomach, ileum, jejunum and colon.

The protein resides in the cell membrane. Its subcellular location is the cytoplasmic vesicle. Its function is as follows. G-protein coupled opioid receptor that functions as a receptor for the endogenous neuropeptide nociceptin. Ligand binding causes a conformation change that triggers signaling via guanine nucleotide-binding proteins (G proteins) and modulates the activity of down-stream effectors. Signaling via G proteins mediates inhibition of adenylate cyclase activity and calcium channel activity. Arrestins modulate signaling via G proteins and mediate the activation of alternative signaling pathways that lead to the activation of MAP kinases. Plays a role in modulating nociception and the perception of pain. Plays a role in the regulation of locomotor activity by the neuropeptide nociceptin. The protein is Nociceptin receptor (OPRL1) of Sus scrofa (Pig).